The following is a 269-amino-acid chain: Signal recognition particle SEC65 subunit (269 aa).

Disordered regions lie at residues 30–65 (RTPIAPVQPGPQITRSQDQEPPLFPNFPHPEQDKSV) and 236–269 (PMTKSIYDPEPEQPQVKAPQAPKQPKKKVMKIRG). Positions 248 to 258 (QPQVKAPQAPK) are enriched in low complexity. Residues 259-269 (QPKKKVMKIRG) show a composition bias toward basic residues.

This sequence belongs to the SRP19 family. Fungal signal recognition particle consists of a 7S RNA molecule (scR1) and at least six protein subunits: SRP72, SRP68, SRP54, SEC65, SRP21 andSRP14.

It localises to the cytoplasm. Signal-recognition-particle assembly has a crucial role in targeting secretory proteins to the rough endoplasmic reticulum membrane. It must be involved intimately in the translocation of a wide variety of protein substrates. In Debaryomyces hansenii (strain ATCC 36239 / CBS 767 / BCRC 21394 / JCM 1990 / NBRC 0083 / IGC 2968) (Yeast), this protein is Signal recognition particle SEC65 subunit (SEC65).